A 626-amino-acid chain; its full sequence is Serine/threonine-protein kinase ATG1a (626 aa).

One can recognise a Protein kinase domain in the interval 10–268 (YALGPRIGSG…FREFFNHMFL (259 aa)). Residues 16-24 (IGSGSFAVV) and Lys39 contribute to the ATP site. The active-site Proton acceptor is Asp132. Positions 288–308 (KSLLPSAQPSTSTNRFKSSAE) are enriched in polar residues. A disordered region spans residues 288-347 (KSLLPSAQPSTSTNRFKSSAENVHKHGSSSSASNSQISMPHTSFEKTRKDTEGQCSSNQS). Residues 315–325 (SSSSASNSQIS) are compositionally biased toward low complexity. The segment covering 330 to 339 (SFEKTRKDTE) has biased composition (basic and acidic residues). The short motif at 360-363 (YVLV) is the AIM (Atg8-family-interacting motif) element.

Belongs to the protein kinase superfamily. Ser/Thr protein kinase family. Interacts with ATG13A. Interacts with ATG8E. Binds to ATG8E on autophagic vesicles. In terms of processing, phosphorylated during nutrient starvation. Dephosphorylated in nutrient-rich conditions.

Its subcellular location is the cytoplasmic vesicle. The protein resides in the autophagosome. In terms of biological role, serine/threonine protein kinase involved in autophagy in a nutritional condition-dependent manner. The ATG1-ATG13 protein kinase complex regulates downstream events required for autophagosome enclosure and/or vacuolar delivery. Becomes a target of autophagy under nutrient starvation. Connects autophagy to plant nutritional status. In Arabidopsis thaliana (Mouse-ear cress), this protein is Serine/threonine-protein kinase ATG1a.